The primary structure comprises 330 residues: Flotillin-like protein FloA (330 aa).

The next 2 helical transmembrane spans lie at 5 to 25 (FLPL…FYYV) and 27 to 47 (FLLW…QLFL).

This sequence belongs to the flotillin-like FloA family. In terms of assembly, homooligomerizes.

The protein localises to the cell membrane. Its subcellular location is the membrane raft. Functionally, found in functional membrane microdomains (FMM) that may be equivalent to eukaryotic membrane rafts. FMMs are highly dynamic and increase in number as cells age. Flotillins are thought to be important factors in membrane fluidity. In Parabacteroides distasonis (strain ATCC 8503 / DSM 20701 / CIP 104284 / JCM 5825 / NCTC 11152), this protein is Flotillin-like protein FloA.